Consider the following 491-residue polypeptide: Equilibrative nucleobase transporter 1 (491 aa).

Residues 17–37 (LLECLGFAGVLFGWPSLVFVF) form a helical membrane-spanning segment. The N-linked (GlcNAc...) asparagine glycan is linked to Asn56. Transmembrane regions (helical) follow at residues 72–92 (LIFTLGSFMNNFMTFPTGYIF), 102–122 (LIAIFFYTTATLIIAFTSAGS), 123–143 (AVLLFLAMPMLTIGGILFLIT), 156–176 (STIITLYNGAFDSSSAVFLII), and 188–208 (ASFIFISVCSTWHVARTFLLM). Residues Asn220 and Asn229 are each glycosylated (N-linked (GlcNAc...) asparagine). Position 253 is a phosphoserine (Ser253). Position 258 is a phosphothreonine (Thr258). 6 helical membrane-spanning segments follow: residues 279–299 (FAWHLVWLSVIQLWHYLFIGT), 319–339 (TNAFAFTQFGVLCAPWNGLLM), 356–376 (STLAVALCSTVPSLALTSLLC), 396–418 (ILQVISRSFLYGSNAAFLTLAFP), 427–447 (GLVMALSAVVSLLQFPIFTLI), and 456–476 (FYVNVMFMLAILLTFFHPFLV).

The protein belongs to the SLC43A transporter (TC 2.A.1.44) family. As to expression, widely expressed with highest levels in the liver and lung, followed by the pancreas. Highly expressed in macrophages.

Its subcellular location is the basolateral cell membrane. It catalyses the reaction adenine(out) = adenine(in). It carries out the reaction guanine(out) = guanine(in). The catalysed reaction is hypoxanthine(out) = hypoxanthine(in). Adenine transport is strongly inhibited by decynium-22. Its activity is regulated as follows. 6-mercaptopurine-transport is inhibited by 6-thioguanine, 6-methylmercaptopurine and decynium-22. Functionally, sodium-independent purine-selective nucleobase transporter which mediates the equilibrative transport of extracellular purine nucleobases such as adenine, guanine and hypoxanthine. May regulate fatty acid (FA) transport in adipocytes, acting as a positive regulator of FA efflux and as a negative regulator of FA uptake. Its function is as follows. Sodium-independent purine-selective nucleobase transporter which mediates the equilibrative transport of extracellular purine nucleobase adenine. Mediates the influx and efflux of the purine nucleobase analog drug 6-mercaptopurine across the membrane. The protein is Equilibrative nucleobase transporter 1 (SLC43A3) of Homo sapiens (Human).